The chain runs to 204 residues: Large ribosomal subunit protein uL4 (204 aa).

A disordered region spans residues 49 to 76; that stretch reads KTKGISDVSGTTAKPYGQKRTGRARQGS.

It belongs to the universal ribosomal protein uL4 family. In terms of assembly, part of the 50S ribosomal subunit.

Functionally, one of the primary rRNA binding proteins, this protein initially binds near the 5'-end of the 23S rRNA. It is important during the early stages of 50S assembly. It makes multiple contacts with different domains of the 23S rRNA in the assembled 50S subunit and ribosome. In terms of biological role, forms part of the polypeptide exit tunnel. The protein is Large ribosomal subunit protein uL4 of Wolbachia sp. subsp. Drosophila simulans (strain wRi).